A 572-amino-acid chain; its full sequence is Dihydroxy-acid dehydratase (572 aa).

Cysteine 57 provides a ligand contact to [2Fe-2S] cluster. Residue aspartate 89 coordinates Mg(2+). Cysteine 130 is a [2Fe-2S] cluster binding site. Residues aspartate 131 and lysine 132 each contribute to the Mg(2+) site. At lysine 132 the chain carries N6-carboxylysine. Residue cysteine 202 participates in [2Fe-2S] cluster binding. A Mg(2+)-binding site is contributed by glutamate 453. The active-site Proton acceptor is serine 479.

It belongs to the IlvD/Edd family. As to quaternary structure, homodimer. The cofactor is [2Fe-2S] cluster. Mg(2+) serves as cofactor.

The catalysed reaction is (2R)-2,3-dihydroxy-3-methylbutanoate = 3-methyl-2-oxobutanoate + H2O. It carries out the reaction (2R,3R)-2,3-dihydroxy-3-methylpentanoate = (S)-3-methyl-2-oxopentanoate + H2O. The protein operates within amino-acid biosynthesis; L-isoleucine biosynthesis; L-isoleucine from 2-oxobutanoate: step 3/4. It participates in amino-acid biosynthesis; L-valine biosynthesis; L-valine from pyruvate: step 3/4. Functions in the biosynthesis of branched-chain amino acids. Catalyzes the dehydration of (2R,3R)-2,3-dihydroxy-3-methylpentanoate (2,3-dihydroxy-3-methylvalerate) into 2-oxo-3-methylpentanoate (2-oxo-3-methylvalerate) and of (2R)-2,3-dihydroxy-3-methylbutanoate (2,3-dihydroxyisovalerate) into 2-oxo-3-methylbutanoate (2-oxoisovalerate), the penultimate precursor to L-isoleucine and L-valine, respectively. The sequence is that of Dihydroxy-acid dehydratase from Streptococcus thermophilus (strain CNRZ 1066).